Consider the following 308-residue polypeptide: Homogentisate phytyltransferase (308 aa).

The next 8 membrane-spanning stretches (helical) occupy residues 13–33, 44–64, 104–124, 142–162, 173–193, 219–241, 245–263, and 279–299; these read PHTI…TILG, LDLV…IVGL, LAIA…SLII, AALC…FLFF, ITPI…IAIF, VFRG…GLWA, LNTA…LLWW, and FYQF…LALW.

This sequence belongs to the UbiA prenyltransferase family.

It is found in the membrane. The enzyme catalyses phytyl diphosphate + homogentisate + H(+) = 2-methyl-6-phytyl-1,4-benzene-1,4-diol + CO2 + diphosphate. It participates in cofactor biosynthesis; tocopherol biosynthesis. Functionally, involved in the synthesis of tocopherol (vitamin E). Catalyzes the condensation of homogentisate and phytyl diphosphate to form dimethylphytylhydrquinone. The chain is Homogentisate phytyltransferase from Synechocystis sp. (strain ATCC 27184 / PCC 6803 / Kazusa).